Reading from the N-terminus, the 438-residue chain is 23S rRNA (uracil(1939)-C(5))-methyltransferase RlmD (438 aa).

Residues 13–71 form the TRAM domain; the sequence is KAPLGPMQTYLVEGLTHEAKGVARLNGKVTFIEGALPGETVTAQVNKPGRRFDEAVLNA. 4 residues coordinate [4Fe-4S] cluster: Cys84, Cys90, Cys93, and Cys167. Gln271, Phe300, Asn305, Glu321, Asp348, and Asp368 together coordinate S-adenosyl-L-methionine. Catalysis depends on Cys394, which acts as the Nucleophile.

The protein belongs to the class I-like SAM-binding methyltransferase superfamily. RNA M5U methyltransferase family. RlmD subfamily.

The enzyme catalyses uridine(1939) in 23S rRNA + S-adenosyl-L-methionine = 5-methyluridine(1939) in 23S rRNA + S-adenosyl-L-homocysteine + H(+). Catalyzes the formation of 5-methyl-uridine at position 1939 (m5U1939) in 23S rRNA. The chain is 23S rRNA (uracil(1939)-C(5))-methyltransferase RlmD from Marinomonas posidonica (strain CECT 7376 / NCIMB 14433 / IVIA-Po-181).